The primary structure comprises 262 residues: Zinc finger protein 138 (262 aa).

A C2H2-type 1 zinc finger spans residues phenylalanine 110–histidine 132. Residues tyrosine 138–histidine 160 form a C2H2-type 2; degenerate zinc finger. A C2H2-type 3; degenerate zinc finger spans residues tyrosine 166–arginine 188. The C2H2-type 4 zinc-finger motif lies at tyrosine 194–histidine 216. The segment at tyrosine 222–tyrosine 244 adopts a C2H2-type 5; degenerate zinc-finger fold. Residues tyrosine 250–serine 262 form a C2H2-type 6; degenerate zinc finger.

This sequence belongs to the krueppel C2H2-type zinc-finger protein family.

The protein resides in the nucleus. In terms of biological role, may be involved in transcriptional regulation as a repressor. This is Zinc finger protein 138 (ZNF138) from Homo sapiens (Human).